Here is a 286-residue protein sequence, read N- to C-terminus: tRNA pseudouridine synthase A (286 aa).

D60 functions as the Nucleophile in the catalytic mechanism. Position 132 (Y132) interacts with substrate.

The protein belongs to the tRNA pseudouridine synthase TruA family. Homodimer.

The catalysed reaction is uridine(38/39/40) in tRNA = pseudouridine(38/39/40) in tRNA. Formation of pseudouridine at positions 38, 39 and 40 in the anticodon stem and loop of transfer RNAs. The polypeptide is tRNA pseudouridine synthase A (Mycobacterium leprae (strain TN)).